The sequence spans 756 residues: Amine oxidase [copper-containing] 2 (756 aa).

The Cytoplasmic segment spans residues 1–4; it reads MHLK. The helical transmembrane segment at 5–25 threads the bilayer; the sequence is IVLAFLALSLITIFALAYVLL. The Extracellular segment spans residues 26–756; it reads TSPGGSSQPP…DLPPFSYHGF (731 aa). N-linked (GlcNAc...) asparagine glycosylation is found at asparagine 133, asparagine 198, and asparagine 226. Aspartate 380 acts as the Proton acceptor in catalysis. Cysteine 398 and cysteine 424 form a disulfide bridge. The active-site Schiff-base intermediate with substrate; via topaquinone is the tyrosine 465. The residue at position 465 (tyrosine 465) is a 2',4',5'-topaquinone. The Cu(2+) site is built by histidine 516 and histidine 518. The Ca(2+) site is built by aspartate 525, leucine 526, aspartate 527, glutamate 568, glutamate 637, phenylalanine 659, and asparagine 661. N-linked (GlcNAc...) asparagine glycosylation occurs at asparagine 662. 3 residues coordinate Ca(2+): glutamate 663, aspartate 669, and leucine 670. Histidine 680 contributes to the Cu(2+) binding site. A disulfide bond links cysteine 730 and cysteine 737.

It belongs to the copper/topaquinone oxidase family. In terms of assembly, homodimer; disulfide-linked. Probably forms heterodimers with AOC3. Cu(2+) serves as cofactor. Requires Ca(2+) as cofactor. L-topaquinone is required as a cofactor. Topaquinone (TPQ) is generated by copper-dependent autoxidation of a specific tyrosyl residue. In terms of tissue distribution, expressed in many tissues including adipocytes with higher expression in retina where it is active. As to expression, not expressed in testis. Not expressed in thymus.

The protein resides in the cell membrane. It is found in the cytoplasm. The enzyme catalyses 2-phenylethylamine + O2 + H2O = 2-phenylacetaldehyde + H2O2 + NH4(+). The catalysed reaction is tryptamine + O2 + H2O = indole-3-acetaldehyde + H2O2 + NH4(+). It carries out the reaction tyramine + O2 + H2O = (4-hydroxyphenyl)acetaldehyde + H2O2 + NH4(+). In terms of biological role, catalyzes the oxidative deamination of primary amines to the corresponding aldehydes with the concomitant production of hydrogen peroxide and ammonia. Has a preference for 2-phenylethylamine, tryptamine and tyramine. Could also act on methylamine and benzylamine but much less efficiently. The sequence is that of Amine oxidase [copper-containing] 2 from Homo sapiens (Human).